We begin with the raw amino-acid sequence, 298 residues long: Tyrosine recombinase XerC (298 aa).

Positions 2-88 (TDLHTDVERY…ALRSFFDWLV (87 aa)) constitute a Core-binding (CB) domain. In terms of domain architecture, Tyr recombinase spans 109–288 (HLPKNIDVDD…DFQHLASVYD (180 aa)). Catalysis depends on residues R148, K172, H240, R243, and H266. The active-site O-(3'-phospho-DNA)-tyrosine intermediate is the Y275.

This sequence belongs to the 'phage' integrase family. XerC subfamily. In terms of assembly, forms a cyclic heterotetrameric complex composed of two molecules of XerC and two molecules of XerD, in which XerC interacts with XerD via its C-terminal region, XerD interacts with XerC via its C-terminal region and so on.

The protein resides in the cytoplasm. With respect to regulation, ftsK may regulate the catalytic switch between XerC and XerD in the heterotetrameric complex during the two steps of the recombination process. Its function is as follows. Site-specific tyrosine recombinase, which acts by catalyzing the cutting and rejoining of the recombining DNA molecules. Binds cooperatively to specific DNA consensus sequences that are separated from XerD binding sites by a short central region, forming the heterotetrameric XerC-XerD complex that recombines DNA substrates. The complex is essential to convert dimers of the bacterial chromosome into monomers to permit their segregation at cell division. It also contributes to the segregational stability of plasmids. In the complex XerC specifically exchanges the top DNA strands. In Escherichia coli O139:H28 (strain E24377A / ETEC), this protein is Tyrosine recombinase XerC.